The sequence spans 356 residues: Phospho-N-acetylmuramoyl-pentapeptide-transferase (356 aa).

Transmembrane regions (helical) follow at residues 27 to 47 (AAVA…ILML), 73 to 93 (TMGG…WMDL), 97 to 117 (FVWA…LDDY), 134 to 154 (LLVE…RTGT), 163 to 183 (GIVI…IVGF), 195 to 215 (GLAT…VYLS), 232 to 252 (AGEL…FLWF), 258 to 278 (AVFM…TIAV), 285 to 305 (VLVL…IQVF), and 333 to 353 (TVVI…LATL).

This sequence belongs to the glycosyltransferase 4 family. MraY subfamily. It depends on Mg(2+) as a cofactor.

It localises to the cell inner membrane. It carries out the reaction UDP-N-acetyl-alpha-D-muramoyl-L-alanyl-gamma-D-glutamyl-meso-2,6-diaminopimeloyl-D-alanyl-D-alanine + di-trans,octa-cis-undecaprenyl phosphate = di-trans,octa-cis-undecaprenyl diphospho-N-acetyl-alpha-D-muramoyl-L-alanyl-D-glutamyl-meso-2,6-diaminopimeloyl-D-alanyl-D-alanine + UMP. It functions in the pathway cell wall biogenesis; peptidoglycan biosynthesis. Functionally, catalyzes the initial step of the lipid cycle reactions in the biosynthesis of the cell wall peptidoglycan: transfers peptidoglycan precursor phospho-MurNAc-pentapeptide from UDP-MurNAc-pentapeptide onto the lipid carrier undecaprenyl phosphate, yielding undecaprenyl-pyrophosphoryl-MurNAc-pentapeptide, known as lipid I. The protein is Phospho-N-acetylmuramoyl-pentapeptide-transferase of Sphingopyxis alaskensis (strain DSM 13593 / LMG 18877 / RB2256) (Sphingomonas alaskensis).